Here is a 485-residue protein sequence, read N- to C-terminus: WAS/WASL-interacting protein family member 3 (485 aa).

The segment covering 1–30 (MPVPPPPPPPLPPPPPPLGAPPPPPPPGPP) has biased composition (pro residues). The disordered stretch occupies residues 1 to 485 (MPVPPPPPPP…NSQLSLKALR (485 aa)). 3 short sequence motifs (profilin-binding motif) span residues 3-8 (VPPPPP), 11-16 (LPPPPP), and 20-25 (APPPPP). The WH2 domain occupies 45-62 (GRSALLADIQQGTRLRKV). An Asymmetric dimethylarginine modification is found at R46. The RLRK signature appears at 58 to 61 (RLRK). Residues 63–78 (TQINDRSAPQIESSKG) show a composition bias toward polar residues. Position 150 is a phosphoserine (S150). 2 stretches are compositionally biased toward pro residues: residues 165-200 (PVPP…PPAS) and 207-243 (VSPP…PLPP). S208 carries the phosphoserine modification. Residues 244-259 (ASALSEKAVRPQLAPL) are compositionally biased toward low complexity. Pro residues-rich tracts occupy residues 260-275 (HLPP…PPYG) and 293-312 (PPAP…PPLP). At S394 the chain carries Phosphoserine. Over residues 396-407 (TTELSSKTQQPG) the composition is skewed to polar residues. Basic and acidic residues predominate over residues 417-441 (VIDDFESKFTFHSMEDFPPPDEYKP). The WASP-binding motif motif lies at 426–450 (TFHSMEDFPPPDEYKPGQKIYPSKV). Over residues 475–485 (RNSQLSLKALR) the composition is skewed to polar residues.

The protein belongs to the verprolin family. In terms of assembly, isoform 1 interacts with WASL (via WH1 domain), and monomeric and filamentous actin. As to expression, detected mainly in brain and at lower levels in heart and lung (at protein level). Also detected in testis but not in kidney, liver or spleen.

The protein resides in the cytoplasm. May have a role in spermatogenesis. May be a regulator of cytoskeletal organization. This is WAS/WASL-interacting protein family member 3 (Wipf3) from Rattus norvegicus (Rat).